Here is a 96-residue protein sequence, read N- to C-terminus: MEVTDVRLRRVNTEGRMRAIASITLDQEFVVHDIRVIDGNNGLFVAMPSKRTPDGEFRDIAHPINSGTRSKIQEAVLAEYQKAGEDEVNYEEAGAS.

It belongs to the SpoVG family.

Could be involved in septation. The protein is Putative septation protein SpoVG of Oceanobacillus iheyensis (strain DSM 14371 / CIP 107618 / JCM 11309 / KCTC 3954 / HTE831).